The following is a 112-amino-acid chain: MKTPRPYLEHILQECEFLIERVKGISFEDFVKDPVLTRAFVRSLEIIGEAVKNLPKEFREKHSKVPWKEIAGMRDKLIHEYFGVNYRIIWETILKEIPELEKQVKEILQKEK.

Catalysis depends on residues Arg-74 and His-79. Positions 74–81 (RDKLIHEY) match the RX(4)HXY motif motif. O-di-AMP-tyrosine is present on Tyr-81.

Belongs to the HepT RNase toxin family. As to quaternary structure, homodimer, probably forms a complex with cognate antitoxin TTE0751. In terms of processing, modified by cognate antitoxin TTE0751; probably at least 2 successive AMPylation events occur on Tyr-81.

In terms of biological role, probable toxic component of a putative type VII toxin-antitoxin (TA) system, probably an RNase. Probably neutralized by cognate antitoxin TTE0751. Neutralization may be due to AMPylation by TTE0751. This chain is Putative RNase TTE0752, found in Caldanaerobacter subterraneus subsp. tengcongensis (strain DSM 15242 / JCM 11007 / NBRC 100824 / MB4) (Thermoanaerobacter tengcongensis).